A 358-amino-acid polypeptide reads, in one-letter code: Histidinol-phosphate aminotransferase (358 aa).

The residue at position 210 (K210) is an N6-(pyridoxal phosphate)lysine.

It belongs to the class-II pyridoxal-phosphate-dependent aminotransferase family. Histidinol-phosphate aminotransferase subfamily. As to quaternary structure, homodimer. The cofactor is pyridoxal 5'-phosphate.

It catalyses the reaction L-histidinol phosphate + 2-oxoglutarate = 3-(imidazol-4-yl)-2-oxopropyl phosphate + L-glutamate. It participates in amino-acid biosynthesis; L-histidine biosynthesis; L-histidine from 5-phospho-alpha-D-ribose 1-diphosphate: step 7/9. In Clostridium beijerinckii (strain ATCC 51743 / NCIMB 8052) (Clostridium acetobutylicum), this protein is Histidinol-phosphate aminotransferase.